The chain runs to 367 residues: Phospho-N-acetylmuramoyl-pentapeptide-transferase (367 aa).

10 helical membrane-spanning segments follow: residues 16–36, 62–82, 87–107, 125–145, 158–178, 190–210, 214–234, 240–260, 264–284, and 326–346; these read LLLA…WVRF, TMGG…FNLV, MLLP…DDWL, FWIM…PQPY, VGEV…IVFI, SLAG…TFLA, LTNL…FLWY, QVFM…VVAL, QWLL…STMI, and FVLI…IFGP.

It belongs to the glycosyltransferase 4 family. MraY subfamily. Mg(2+) serves as cofactor.

It is found in the cell membrane. It catalyses the reaction UDP-N-acetyl-alpha-D-muramoyl-L-alanyl-gamma-D-glutamyl-meso-2,6-diaminopimeloyl-D-alanyl-D-alanine + di-trans,octa-cis-undecaprenyl phosphate = di-trans,octa-cis-undecaprenyl diphospho-N-acetyl-alpha-D-muramoyl-L-alanyl-D-glutamyl-meso-2,6-diaminopimeloyl-D-alanyl-D-alanine + UMP. It participates in cell wall biogenesis; peptidoglycan biosynthesis. Functionally, catalyzes the initial step of the lipid cycle reactions in the biosynthesis of the cell wall peptidoglycan: transfers peptidoglycan precursor phospho-MurNAc-pentapeptide from UDP-MurNAc-pentapeptide onto the lipid carrier undecaprenyl phosphate, yielding undecaprenyl-pyrophosphoryl-MurNAc-pentapeptide, known as lipid I. This Chloroflexus aurantiacus (strain ATCC 29366 / DSM 635 / J-10-fl) protein is Phospho-N-acetylmuramoyl-pentapeptide-transferase.